The sequence spans 73 residues: Kazal peptide Pr13a (73 aa).

A signal peptide spans methionine 1 to glycine 20. Residues serine 21 to cysteine 73 enclose the Kazal-like domain. 3 disulfide bridges follow: cysteine 23/cysteine 59, cysteine 27/cysteine 52, and cysteine 36/cysteine 73.

Expressed by the venom gland (anterior main gland) (at protein level).

Its subcellular location is the secreted. May act as a serine protease inhibitor, since it possess the kazal serine protease inhibitor signature. The sequence is that of Kazal peptide Pr13a from Platymeris rhadamanthus (Red spot assassin bug).